The primary structure comprises 227 residues: Flagellar L-ring protein (227 aa).

A signal peptide spans 1–16 (MRNIILFAAGTLLLSG). Cysteine 17 carries the N-palmitoyl cysteine lipid modification. Cysteine 17 is lipidated: S-diacylglycerol cysteine.

Belongs to the FlgH family. In terms of assembly, the basal body constitutes a major portion of the flagellar organelle and consists of four rings (L,P,S, and M) mounted on a central rod.

The protein resides in the cell outer membrane. Its subcellular location is the bacterial flagellum basal body. Its function is as follows. Assembles around the rod to form the L-ring and probably protects the motor/basal body from shearing forces during rotation. The sequence is that of Flagellar L-ring protein from Pseudoalteromonas translucida (strain TAC 125).